A 346-amino-acid chain; its full sequence is DNA-directed RNA polymerase subunit alpha (346 aa).

Residues 1–242 (MLIQDGDKLI…DQLSVFINFD (242 aa)) are alpha N-terminal domain (alpha-NTD). The segment at 258–346 (LNPNLFKSID…WLKRKEKNEA (89 aa)) is alpha C-terminal domain (alpha-CTD).

The protein belongs to the RNA polymerase alpha chain family. Homodimer. The RNAP catalytic core consists of 2 alpha, 1 beta, 1 beta' and 1 omega subunit. When a sigma factor is associated with the core the holoenzyme is formed, which can initiate transcription.

It catalyses the reaction RNA(n) + a ribonucleoside 5'-triphosphate = RNA(n+1) + diphosphate. Its function is as follows. DNA-dependent RNA polymerase catalyzes the transcription of DNA into RNA using the four ribonucleoside triphosphates as substrates. In Maridesulfovibrio salexigens (strain ATCC 14822 / DSM 2638 / NCIMB 8403 / VKM B-1763) (Desulfovibrio salexigens), this protein is DNA-directed RNA polymerase subunit alpha.